The chain runs to 694 residues: Elongation factor G (694 aa).

Residues Glu10–Val285 form the tr-type G domain. Residues Ala19–Thr26, Asp83–His87, and Asn137–Asp140 contribute to the GTP site.

This sequence belongs to the TRAFAC class translation factor GTPase superfamily. Classic translation factor GTPase family. EF-G/EF-2 subfamily.

The protein resides in the cytoplasm. Functionally, catalyzes the GTP-dependent ribosomal translocation step during translation elongation. During this step, the ribosome changes from the pre-translocational (PRE) to the post-translocational (POST) state as the newly formed A-site-bound peptidyl-tRNA and P-site-bound deacylated tRNA move to the P and E sites, respectively. Catalyzes the coordinated movement of the two tRNA molecules, the mRNA and conformational changes in the ribosome. This chain is Elongation factor G, found in Limosilactobacillus fermentum (strain NBRC 3956 / LMG 18251) (Lactobacillus fermentum).